The primary structure comprises 148 residues: Phosphoribosyl-AMP cyclohydrolase (148 aa).

Aspartate 91 is a Mg(2+) binding site. Cysteine 92 is a binding site for Zn(2+). 2 residues coordinate Mg(2+): aspartate 93 and aspartate 95. Cysteine 109 and cysteine 116 together coordinate Zn(2+).

The protein belongs to the PRA-CH family. As to quaternary structure, homodimer. Requires Mg(2+) as cofactor. The cofactor is Zn(2+).

Its subcellular location is the cytoplasm. It carries out the reaction 1-(5-phospho-beta-D-ribosyl)-5'-AMP + H2O = 1-(5-phospho-beta-D-ribosyl)-5-[(5-phospho-beta-D-ribosylamino)methylideneamino]imidazole-4-carboxamide. The protein operates within amino-acid biosynthesis; L-histidine biosynthesis; L-histidine from 5-phospho-alpha-D-ribose 1-diphosphate: step 3/9. In terms of biological role, catalyzes the hydrolysis of the adenine ring of phosphoribosyl-AMP. The sequence is that of Phosphoribosyl-AMP cyclohydrolase from Rhodopseudomonas palustris (strain HaA2).